The sequence spans 282 residues: Para-Rep C1 (282 aa).

A CRESS-DNA virus Rep endonuclease domain is found at 1–99 (MASKRWCFTL…ETLISEIGAP (99 aa)). The RCR-1 signature appears at 7–10 (CFTL). A divalent metal cation-binding residues include Glu-38 and His-47. An RCR-2 motif is present at residues 47-49 (HLQ). Positions 56 to 77 (KMIRLGGLKKKFGYRAHWEIAK) match the Nuclear localization signal motif. Tyr-86 serves as the catalytic For DNA cleavage activity. The short motif at 86–89 (YCTK) is the RCR-3 element. Residue Ser-94 coordinates a divalent metal cation. Position 174–182 (174–182 (GSDGGEGKS)) interacts with ATP.

Belongs to the nanoviridea/circoviridae replication-associated protein family. As to quaternary structure, homooligomer (Potential). Rep binds to repeated DNA motifs (iterons). It depends on Mg(2+) as a cofactor. Mn(2+) serves as cofactor.

The protein localises to the host nucleus. It carries out the reaction ATP + H2O = ADP + phosphate + H(+). In terms of biological role, initiates and terminates the replication only of its own subviral DNA molecule. The closed circular ssDNA genome is first converted to a superhelical dsDNA. Rep binds a specific hairpin at the genome origin of replication. Introduces an endonucleolytic nick within the intergenic region of the genome, thereby initiating the rolling circle replication (RCR). Following cleavage, binds covalently to the 5'-phosphate of DNA as a tyrosyl ester. The cleavage gives rise to a free 3'-OH that serves as a primer for the cellular DNA polymerase. The polymerase synthesizes the (+) strand DNA by rolling circle mechanism. After one round of replication, a Rep-catalyzed nucleotidyl transfer reaction releases a circular single-stranded virus genome, thereby terminating the replication. Displays origin-specific DNA cleavage, nucleotidyl transferase, ATPase and helicase activities. The sequence is that of Para-Rep C1 (C1) from Faba bean necrotic yellows C11 alphasatellite (FBNYC11A).